A 128-amino-acid chain; its full sequence is UPF0325 protein NT01EI_0832 (128 aa).

This sequence belongs to the UPF0325 family.

The protein is UPF0325 protein NT01EI_0832 of Edwardsiella ictaluri (strain 93-146).